Here is a 204-residue protein sequence, read N- to C-terminus: Inactive ribonuclease-like protein 9 (204 aa).

Positions 1 to 26 (MMRTLITTHPLLLLLLLQQLLQPVQF) are cleaved as a signal peptide. Disulfide bonds link Cys97-Cys152, Cys115-Cys167, and Cys122-Cys129. N-linked (GlcNAc...) asparagine glycans are attached at residues Asn130 and Asn142.

This sequence belongs to the pancreatic ribonuclease family.

The protein resides in the secreted. Functionally, does not exhibit any ribonuclease activity. This is Inactive ribonuclease-like protein 9 (RNASE9) from Papio anubis (Olive baboon).